Here is a 221-residue protein sequence, read N- to C-terminus: Coiled-coil domain-containing protein 70 (221 aa).

A coiled-coil region spans residues 129–168 (NALWEKDRNLLQEDKALWEEEKALWVEERALLEEEKALWE).

This Macaca fascicularis (Crab-eating macaque) protein is Coiled-coil domain-containing protein 70 (CCDC70).